Consider the following 363-residue polypeptide: Guanine nucleotide-binding protein alpha-11 subunit (363 aa).

The G-alpha domain maps to 26–363; the sequence is KMLKILLLGG…KISMEKVGFM (338 aa). Residues 29-42 are G1 motif; it reads KILLLGGPECGKST. Residues 34–41, 172–178, 197–201, 276–279, and alanine 335 each bind GTP; these read GGPECGKS, LRARVPT, DVGGQ, and NKID. Serine 41 and threonine 178 together coordinate Mg(2+). A G2 motif region spans residues 170-178; the sequence is DVLRARVPT. A G3 motif region spans residues 193-202; sequence LRMVDVGGQR. Residues 272–279 form a G4 motif region; that stretch reads ILFLNKID. Residues 333–338 form a G5 motif region; it reads TNATDT.

It belongs to the G-alpha family. G proteins are composed of 3 units; alpha, beta and gamma. The alpha chain contains the guanine nucleotide binding site. In terms of tissue distribution, expressed in ADL and ASH neurons.

Functionally, guanine nucleotide-binding proteins (G proteins) are involved as modulators or transducers in various transmembrane signaling systems. Mediates the transduction of food and serotonin signals, which modulates the avoidance response to the odorant octanol. Has a role in lifespan to promote longevity. The chain is Guanine nucleotide-binding protein alpha-11 subunit (gpa-11) from Caenorhabditis elegans.